We begin with the raw amino-acid sequence, 243 residues long: Small ribosomal subunit protein uS2 (243 aa).

This sequence belongs to the universal ribosomal protein uS2 family.

The polypeptide is Small ribosomal subunit protein uS2 (Aliivibrio salmonicida (strain LFI1238) (Vibrio salmonicida (strain LFI1238))).